Reading from the N-terminus, the 149-residue chain is Large ribosomal subunit protein uL13 (149 aa).

The protein belongs to the universal ribosomal protein uL13 family. As to quaternary structure, part of the 50S ribosomal subunit.

This protein is one of the early assembly proteins of the 50S ribosomal subunit, although it is not seen to bind rRNA by itself. It is important during the early stages of 50S assembly. The chain is Large ribosomal subunit protein uL13 from Chlorobium luteolum (strain DSM 273 / BCRC 81028 / 2530) (Pelodictyon luteolum).